We begin with the raw amino-acid sequence, 834 residues long: WW domain-containing adapter protein with coiled-coil homolog (834 aa).

Disordered stretches follow at residues 1–247 (MVMH…WSEH), 268–411 (KPKE…SVAT), and 430–504 (VTGA…GAKG). Residues 22 to 31 (HTSYQSSKYS) are compositionally biased toward low complexity. Over residues 33 to 50 (SKRDYERDRSSNYRDRDL) the composition is skewed to basic and acidic residues. A compositionally biased stretch (gly residues) spans 53–77 (GAGGGGGGGSAGGGGGGSGNGGGPL). Over residues 96–108 (RSHDLRDRSDHRG) the composition is skewed to basic and acidic residues. The span at 109 to 119 (GGGGNGRGGSG) shows a compositional bias: gly residues. Composition is skewed to basic and acidic residues over residues 127–168 (KMRD…DRRG), 181–246 (SSRE…DWSE), and 268–303 (KPKEWVDRERNLPRDQHREKDYRDKDRDRDRDDRFS). In terms of domain architecture, WW spans 244-271 (WSEHVSSSGKMYYYNCKTEISQWEKPKE). 2 stretches are compositionally biased toward polar residues: residues 304 to 314 (RSTYKHSNSSR) and 350 to 363 (GDSTPTSEASYSLS). The span at 369–384 (HGGGPGGGGPGGGGGS) shows a compositional bias: gly residues. Composition is skewed to low complexity over residues 402 to 411 (TANSSASVAT) and 431 to 466 (TGATMLPTMSGMLNSNSSNSAGGSSSNASSSSLRNS). Polar residues predominate over residues 472–496 (GSTSGTTVPTLGSQDPHQHHLNSNA).

In terms of tissue distribution, expressed in adult head and thorax and in larval central nervous system and fat body.

The protein resides in the nucleus. The protein localises to the lysosome. Acts as a linker between gene transcription and histone H2B monoubiquitination at 'Lys-118'. Regulates the cell-cycle checkpoint activation in response to DNA damage. Positive regulator of amino acid starvation-induced autophagy. Also acts as a negative regulator of basal autophagy. Positively regulates mTor activity. Promotes, in an energy-dependent manner, the assembly of the TTT complex and the RUVBL complex composed of pont and rept into the TTT-RUVBL complex. This leads to dimerization of the mTORC1 complex and its subsequent activation. May negatively regulate the ubiquitin proteasome pathway. Required for habituation, a form of non-associative learning. This chain is WW domain-containing adapter protein with coiled-coil homolog, found in Drosophila melanogaster (Fruit fly).